A 335-amino-acid chain; its full sequence is MASPHAENDMVPEMIDHRHLQMWKWLHSRSGARGNTSETSFESSVSVSTNSFDFSADMSRSIDSSSSRMLPSPITNFVTPSSSFSSHQMHDIYSLAASYLQAPPPPYTPTTAFHPHNAHQLLLLHNMTAAVQTPEDPDIDVVGLADTTNLVSLNDKEDEEKLDQTTESEESDRISISTTEECPLDLTFKPTSLDSPTSSTFIPLRPSVIIDHHIPKPHTSVRRSMSSVSSSASSTQEEVAAHFRRSLSGKWPKRCKVNSEEARNSPLRRRPSFNTHTSVSSLSVHSVSPTPPVTSSAQTIIVNNHCSDTTLSVADHFRRALLGKGLFDFQRKSNK.

3 disordered regions span residues 153–174 (LNDK…SDRI), 218–239 (HTSV…QEEV), and 254–295 (RCKV…PVTS). The segment covering 156–170 (KEDEEKLDQTTESEE) has biased composition (acidic residues). Composition is skewed to low complexity over residues 222–234 (RRSM…SASS) and 275–295 (THTS…PVTS).

This is an uncharacterized protein from Caenorhabditis elegans.